We begin with the raw amino-acid sequence, 808 residues long: ATP-dependent 6-phosphofructokinase (808 aa).

The segment at 1–21 (MSSTQAPVEPPKRRRIGVLTS) is disordered. An N-terminal catalytic PFK domain 1 region spans residues 1–389 (MSSTQAPVEP…YHFAYRNTAT (389 aa)). ATP is bound by residues Gly23, 86–87 (RS), and 116–119 (GDGS). Asp117 is a binding site for Mg(2+). Residues 162–164 (SID), Arg199, 206–208 (MGR), Glu263, Arg291, and 297–300 (HTQR) contribute to the substrate site. Asp164 acts as the Proton acceptor in catalysis. The interdomain linker stretch occupies residues 390–403 (PDHPKMILPQDKRM). The segment at 404 to 808 (RIAIIHVGAP…DIDPSALTSS (405 aa)) is C-terminal regulatory PFK domain 2. Residues Arg480, 537–541 (TISNN), Arg575, 582–584 (QGG), Glu642, Arg668, 674–677 (HFQQ), and Arg749 each bind beta-D-fructose 2,6-bisphosphate.

This sequence belongs to the phosphofructokinase type A (PFKA) family. ATP-dependent PFK group I subfamily. Eukaryotic two domain clade 'E' sub-subfamily. In terms of assembly, homotetramer. Mg(2+) is required as a cofactor.

Its subcellular location is the cytoplasm. The enzyme catalyses beta-D-fructose 6-phosphate + ATP = beta-D-fructose 1,6-bisphosphate + ADP + H(+). The protein operates within carbohydrate degradation; glycolysis; D-glyceraldehyde 3-phosphate and glycerone phosphate from D-glucose: step 3/4. With respect to regulation, allosterically activated by ADP, AMP, or fructose 2,6-bisphosphate, and allosterically inhibited by ATP or citrate. Catalyzes the phosphorylation of D-fructose 6-phosphate to fructose 1,6-bisphosphate by ATP, the first committing step of glycolysis. The protein is ATP-dependent 6-phosphofructokinase (pfkA) of Aspergillus fumigatus (strain ATCC MYA-4609 / CBS 101355 / FGSC A1100 / Af293) (Neosartorya fumigata).